The sequence spans 252 residues: Imidazole glycerol phosphate synthase subunit HisF (252 aa).

Residues D11 and D130 contribute to the active site.

The protein belongs to the HisA/HisF family. As to quaternary structure, heterodimer of HisH and HisF.

It is found in the cytoplasm. The enzyme catalyses 5-[(5-phospho-1-deoxy-D-ribulos-1-ylimino)methylamino]-1-(5-phospho-beta-D-ribosyl)imidazole-4-carboxamide + L-glutamine = D-erythro-1-(imidazol-4-yl)glycerol 3-phosphate + 5-amino-1-(5-phospho-beta-D-ribosyl)imidazole-4-carboxamide + L-glutamate + H(+). It participates in amino-acid biosynthesis; L-histidine biosynthesis; L-histidine from 5-phospho-alpha-D-ribose 1-diphosphate: step 5/9. In terms of biological role, IGPS catalyzes the conversion of PRFAR and glutamine to IGP, AICAR and glutamate. The HisF subunit catalyzes the cyclization activity that produces IGP and AICAR from PRFAR using the ammonia provided by the HisH subunit. The chain is Imidazole glycerol phosphate synthase subunit HisF from Lacticaseibacillus casei (strain BL23) (Lactobacillus casei).